Here is a 380-residue protein sequence, read N- to C-terminus: MTADGNDVTPYAVESDDLDYEKLLARFGADELTDDQRARFPDHPLVNRGLFYAGRDVDDFLTAGEQSIVTGVGPSGPMHLGHAMVFYFARRLQDEFGARVYVPLSDDEKYWFKDQTPAETGDYLRANLRDLLAVGFDPELTRIVVDTRDADVLYPLATAFAGDVRHATLQNVYGEPDNVGQAFYPAVQTAHLLLPQLVHGEHETLVPIAVDQDPHVRVSRDVAAKARYPVGKPGALLMQFLPSLAGPGKMSSSAGVSIRLTDSPDTVREKVRTHAYTGGRASVEEHRAKGGVPAEDVPFQYLSAFFEPDDAELARIEREYRAGDLLSGELKDLAADRITEFLAAHQRRRAALGDVTEALDAFRLTDDERQRARDAVGFGY.

The 'HIGH' region signature appears at 74–82 (PSGPMHLGH). Positions 249–253 (KMSSS) match the 'KMSKS' region motif.

This sequence belongs to the class-I aminoacyl-tRNA synthetase family.

It localises to the cytoplasm. It catalyses the reaction tRNA(Trp) + L-tryptophan + ATP = L-tryptophyl-tRNA(Trp) + AMP + diphosphate + H(+). This is Tryptophan--tRNA ligase 2 from Halobacterium salinarum (strain ATCC 700922 / JCM 11081 / NRC-1) (Halobacterium halobium).